The primary structure comprises 123 residues: Glucose starvation-inducible protein B (123 aa).

2 stretches are compositionally biased toward basic and acidic residues: residues 1-29 (MADNNKMSREEAGRKGGETTSKNHDKEFY) and 41-109 (SKNH…KEFY). The disordered stretch occupies residues 1-123 (MADNNKMSRE…SKGGNARNND (123 aa)). 5 tandem repeats follow at residues 13–32 (GRKGGETTSKNHDKEFYQEI), 33–52 (GQKGGEATSKNHDKEFYQEI), 53–72 (GEKGGEATSKNHDKEFYQEI), 73–92 (GEKGGEATSENHDKEFYQEI), and 93–112 (GRKGGEATSKNHDKEFYQEI). The tract at residues 13–120 (GRKGGETTSK…EIGSKGGNAR (108 aa)) is 5 X 20 AA approximate tandem repeats.

Its function is as follows. Involved in an adaptive response to nutrient deprivation other than sporulation. This is Glucose starvation-inducible protein B (gsiB) from Bacillus subtilis (strain 168).